The primary structure comprises 554 residues: Protein translocase subunit SecD (554 aa).

6 consecutive transmembrane segments (helical) span residues 10 to 30 (LVIL…MFYA), 392 to 412 (AGMV…IASY), 414 to 434 (LFGF…FAVM), 435 to 455 (GAIG…TIGT), 491 to 511 (AIID…VLGA), and 516 to 536 (GFAV…IWVV).

It belongs to the SecD/SecF family. SecD subfamily. Forms a complex with SecF. Part of the essential Sec protein translocation apparatus which comprises SecA, SecYEG and auxiliary proteins SecDF-YajC and YidC.

It localises to the cell inner membrane. Its function is as follows. Part of the Sec protein translocase complex. Interacts with the SecYEG preprotein conducting channel. SecDF uses the proton motive force (PMF) to complete protein translocation after the ATP-dependent function of SecA. This Rhodobacter capsulatus (strain ATCC BAA-309 / NBRC 16581 / SB1003) protein is Protein translocase subunit SecD.